A 78-amino-acid polypeptide reads, in one-letter code: D-alanyl carrier protein (78 aa).

Residues 1–78 (MDVENTVVEI…KIIAKAKELQ (78 aa)) enclose the Carrier domain. At Ser36 the chain carries O-(pantetheine 4'-phosphoryl)serine.

It belongs to the DltC family. In terms of processing, 4'-phosphopantetheine is transferred from CoA to a specific serine of apo-DCP.

Its subcellular location is the cytoplasm. The protein operates within cell wall biogenesis; lipoteichoic acid biosynthesis. Functionally, carrier protein involved in the D-alanylation of lipoteichoic acid (LTA). The loading of thioester-linked D-alanine onto DltC is catalyzed by D-alanine--D-alanyl carrier protein ligase DltA. The DltC-carried D-alanyl group is further transferred to cell membrane phosphatidylglycerol (PG) by forming an ester bond, probably catalyzed by DltD. D-alanylation of LTA plays an important role in modulating the properties of the cell wall in Gram-positive bacteria, influencing the net charge of the cell wall. This chain is D-alanyl carrier protein, found in Latilactobacillus sakei subsp. sakei (strain 23K) (Lactobacillus sakei subsp. sakei).